Consider the following 183-residue polypeptide: Ankyrin repeat domain-containing protein 39 (183 aa).

4 ANK repeats span residues 30-59, 63-92, 96-125, and 129-158; these read DFER…DPSQ, AGYT…KCDA, GGAT…NPRV, and DGMT…ALKA. Ser-153 bears the Phosphoserine mark.

The protein belongs to the ANKRD39 family.

The chain is Ankyrin repeat domain-containing protein 39 (ANKRD39) from Homo sapiens (Human).